The chain runs to 31 residues: Cytochrome b6-f complex subunit 6 (31 aa).

Residues 4–26 (ITSYFGFLLAASTITPALLIGLS) form a helical membrane-spanning segment.

It belongs to the PetL family. The 4 large subunits of the cytochrome b6-f complex are cytochrome b6, subunit IV (17 kDa polypeptide, PetD), cytochrome f and the Rieske protein, while the 4 small subunits are PetG, PetL, PetM and PetN. The complex functions as a dimer.

It is found in the plastid. Its subcellular location is the chloroplast thylakoid membrane. In terms of biological role, component of the cytochrome b6-f complex, which mediates electron transfer between photosystem II (PSII) and photosystem I (PSI), cyclic electron flow around PSI, and state transitions. PetL is important for photoautotrophic growth as well as for electron transfer efficiency and stability of the cytochrome b6-f complex. This is Cytochrome b6-f complex subunit 6 from Illicium oligandrum (Star anise).